Here is a 906-residue protein sequence, read N- to C-terminus: Protein transport protein SEC24-2 (906 aa).

Residues cysteine 222, cysteine 225, cysteine 244, and cysteine 247 each coordinate Zn(2+). The tract at residues 222 to 247 is zinc finger-like; sequence CRRCRSYMNPFVTFIEQGRRWRCNFC.

Belongs to the SEC23/SEC24 family. SEC24 subfamily. The COPII coat is composed of at least 5 proteins: the SEC23/24 complex, the SEC13/31 complex, and the protein SAR1. Golgi apparatus membrane; Peripheral membrane protein; Cytoplasmic side.

It is found in the cytoplasm. The protein localises to the cytoplasmic vesicle. It localises to the COPII-coated vesicle membrane. Its subcellular location is the endoplasmic reticulum membrane. The protein resides in the golgi apparatus membrane. In terms of biological role, component of the coat protein complex II (COPII) which promotes the formation of transport vesicles from the endoplasmic reticulum (ER). The coat has two main functions, the physical deformation of the endoplasmic reticulum membrane into vesicles and the selection of cargo molecules. In Candida glabrata (strain ATCC 2001 / BCRC 20586 / JCM 3761 / NBRC 0622 / NRRL Y-65 / CBS 138) (Yeast), this protein is Protein transport protein SEC24-2 (SEC242).